A 277-amino-acid chain; its full sequence is Large ribosomal subunit protein uL2 (277 aa).

Residues 212–277 (RWRGKRPHVR…KFIVRGRKSK (66 aa)) form a disordered region. Over residues 254-277 (TAGKKTRDKKKASTKFIVRGRKSK) the composition is skewed to basic residues.

This sequence belongs to the universal ribosomal protein uL2 family. Part of the 50S ribosomal subunit. Forms a bridge to the 30S subunit in the 70S ribosome.

Functionally, one of the primary rRNA binding proteins. Required for association of the 30S and 50S subunits to form the 70S ribosome, for tRNA binding and peptide bond formation. It has been suggested to have peptidyltransferase activity; this is somewhat controversial. Makes several contacts with the 16S rRNA in the 70S ribosome. This is Large ribosomal subunit protein uL2 from Leuconostoc citreum (strain KM20).